Here is a 607-residue protein sequence, read N- to C-terminus: Zinc finger protein 750 (607 aa).

Residues 25–51 form a CCHC-type zinc finger; that stretch reads YQCFQCPFTCNIKSHLFNHMKYNLCKN. 4 residues coordinate Zn(2+): cysteine 27, cysteine 30, histidine 43, and cysteine 49. The segment covering 60-78 has biased composition (polar residues); it reads MEQTGKASRASQHSPAFSH. Disordered regions lie at residues 60-133, 318-467, 482-511, and 575-607; these read MEQT…DKSE, RAVQ…SSQE, QALPNTSETPEKETISNAEVSTTESPQDLE, and GQKRANNRPLRHTNKRAKVKEPSRPRRKRSQNC. 2 stretches are compositionally biased toward basic and acidic residues: residues 79 to 133 and 318 to 334; these read NSKE…DKSE and RAVQEHNTGDKGIRESP. Over residues 369–380 the composition is skewed to low complexity; sequence HSGSQSHIISGS. A compositionally biased stretch (acidic residues) spans 421–432; it reads DKEEDEETEEEI. Residues 452–462 are compositionally biased toward basic and acidic residues; that stretch reads HYPDRELHYDS. Positions 496–507 are enriched in polar residues; the sequence is ISNAEVSTTESP. The span at 579-592 shows a compositional bias: basic residues; it reads ANNRPLRHTNKRAK.

It localises to the nucleus. In terms of biological role, transcription factor involved in epidermis differentiation. The chain is Zinc finger protein 750 (znf750) from Danio rerio (Zebrafish).